Consider the following 108-residue polypeptide: uncharacterized protein (108 aa).

A run of 3 helical transmembrane segments spans residues 36 to 56, 58 to 78, and 88 to 108; these read LAIM…DKMI, FIFV…KLLF, and IVFL…FFNL.

The protein resides in the cell membrane. This is an uncharacterized protein from Alkalihalophilus pseudofirmus (strain ATCC BAA-2126 / JCM 17055 / OF4) (Bacillus pseudofirmus).